A 142-amino-acid chain; its full sequence is MGNANIDESDLKILEILKKNARTPYTLIAKELKVSEAAIRKRIEKLIRQGIIKRFTIEYELENEIRAIVMVQSTPQIPTPEISKKIAKIPGVEVVYETTGDYDILVIVRGTNITSINRTIDEIRSIQGVVGTNSTIILRTWF.

The HTH asnC-type domain occupies 6 to 69; it reads IDESDLKILE…ELENEIRAIV (64 aa). The H-T-H motif DNA-binding region spans 25–44; sequence YTLIAKELKVSEAAIRKRIE.

As to quaternary structure, homotetramer.

It localises to the cytoplasm. It participates in amino-acid biosynthesis; L-lysine biosynthesis via AAA pathway [regulation]. Its function is as follows. In the absence or at low concentrations of lysine, activates the biosynthesis of this amino acid via the alpha-aminoadipate (AAA) pathway. This is HTH-type transcriptional regulator LysM (lysM) from Saccharolobus solfataricus (strain ATCC 35092 / DSM 1617 / JCM 11322 / P2) (Sulfolobus solfataricus).